The chain runs to 257 residues: GTP cyclohydrolase III (257 aa).

It belongs to the archaeal-type GTP cyclohydrolase family.

The enzyme catalyses GTP + 3 H2O = 2-amino-5-formylamino-6-(5-phospho-D-ribosylamino)pyrimidin-4(3H)-one + 2 phosphate + 2 H(+). In terms of biological role, catalyzes the formation of 2-amino-5-formylamino-6-ribofuranosylamino-4(3H)-pyrimidinone ribonucleotide monophosphate and inorganic phosphate from GTP. Also has an independent pyrophosphate phosphohydrolase activity. In Halorubrum lacusprofundi (strain ATCC 49239 / DSM 5036 / JCM 8891 / ACAM 34), this protein is GTP cyclohydrolase III.